The sequence spans 201 residues: Recombination protein RecR (201 aa).

The segment at 60–75 (CSRCGNVDTVDPCTVC) adopts a C4-type zinc-finger fold. The 96-residue stretch at 83-178 (SIIIVVEDVS…KITRLAHGVP (96 aa)) folds into the Toprim domain.

The protein belongs to the RecR family.

Its function is as follows. May play a role in DNA repair. It seems to be involved in an RecBC-independent recombinational process of DNA repair. It may act with RecF and RecO. The chain is Recombination protein RecR from Rhizobium leguminosarum bv. trifolii (strain WSM2304).